The following is a 335-amino-acid chain: Calcium/calmodulin-dependent protein kinase type I (335 aa).

Positions 31-291 constitute a Protein kinase domain; it reads YRVGRVLGGG…AADALKHPFL (261 aa). Residue 37–45 coordinates ATP; it reads LGGGTYATV. The active-site Proton acceptor is Asp154. Position 192 is a phosphothreonine; by autocatalysis (Thr192). Residues 310-334 are calmodulin-binding; sequence NARKTFRTAYNAVRAFNTWKKLENK.

It belongs to the protein kinase superfamily. CAMK Ser/Thr protein kinase family. CaMK subfamily.

It localises to the cytoplasm. It catalyses the reaction L-seryl-[protein] + ATP = O-phospho-L-seryl-[protein] + ADP + H(+). The enzyme catalyses L-threonyl-[protein] + ATP = O-phospho-L-threonyl-[protein] + ADP + H(+). Its function is as follows. Important in cell cycle regulation. In Schizosaccharomyces pombe (strain 972 / ATCC 24843) (Fission yeast), this protein is Calcium/calmodulin-dependent protein kinase type I (cmk1).